A 255-amino-acid polypeptide reads, in one-letter code: Zinc finger CCCH domain-containing protein 37 (255 aa).

2 C3H1-type zinc fingers span residues 98–128 (AYTG…HGTF) and 137–159 (YRTR…AHTA).

This chain is Zinc finger CCCH domain-containing protein 37, found in Oryza sativa subsp. japonica (Rice).